The sequence spans 619 residues: Probable transporter mch1 (619 aa).

The next 12 membrane-spanning stretches (helical) occupy residues 88–108 (VISC…PLFL), 120–140 (AVSI…GYLC), 147–167 (PLAL…AFAY), 184–204 (VMVV…LAAV), 219–239 (IMLA…SQVA), 261–281 (FLFL…GLRI), 377–397 (TMWW…AYIN), 428–448 (IIAL…DFFA), 480–500 (LAFL…LSSP), 515–535 (LIGL…SVVW), 541–561 (GTNW…WGVI), and 589–609 (FWAV…ILAW).

It belongs to the major facilitator superfamily.

The protein localises to the vacuole membrane. Probable transporter. The polypeptide is Probable transporter mch1 (mch1) (Aspergillus fumigatus (strain ATCC MYA-4609 / CBS 101355 / FGSC A1100 / Af293) (Neosartorya fumigata)).